A 417-amino-acid polypeptide reads, in one-letter code: Serine hydroxymethyltransferase 1 (417 aa).

(6S)-5,6,7,8-tetrahydrofolate contacts are provided by residues Leu121 and 125–127 (GHL). N6-(pyridoxal phosphate)lysine is present on Lys229. A (6S)-5,6,7,8-tetrahydrofolate-binding site is contributed by 354 to 356 (SPF).

The protein belongs to the SHMT family. In terms of assembly, homodimer. Pyridoxal 5'-phosphate serves as cofactor.

It is found in the cytoplasm. The enzyme catalyses (6R)-5,10-methylene-5,6,7,8-tetrahydrofolate + glycine + H2O = (6S)-5,6,7,8-tetrahydrofolate + L-serine. It participates in one-carbon metabolism; tetrahydrofolate interconversion. The protein operates within amino-acid biosynthesis; glycine biosynthesis; glycine from L-serine: step 1/1. In terms of biological role, catalyzes the reversible interconversion of serine and glycine with tetrahydrofolate (THF) serving as the one-carbon carrier. This reaction serves as the major source of one-carbon groups required for the biosynthesis of purines, thymidylate, methionine, and other important biomolecules. Also exhibits THF-independent aldolase activity toward beta-hydroxyamino acids, producing glycine and aldehydes, via a retro-aldol mechanism. This chain is Serine hydroxymethyltransferase 1, found in Pseudomonas savastanoi pv. phaseolicola (strain 1448A / Race 6) (Pseudomonas syringae pv. phaseolicola (strain 1448A / Race 6)).